A 562-amino-acid chain; its full sequence is NAD-dependent malic enzyme (562 aa).

Tyrosine 101 functions as the Proton donor in the catalytic mechanism. Arginine 154 is an NAD(+) binding site. The active-site Proton acceptor is the lysine 172. Residues glutamate 243, aspartate 244, and aspartate 267 each coordinate a divalent metal cation. Residues aspartate 267 and asparagine 415 each contribute to the NAD(+) site.

It belongs to the malic enzymes family. As to quaternary structure, homotetramer. Mg(2+) is required as a cofactor. Mn(2+) serves as cofactor.

It carries out the reaction (S)-malate + NAD(+) = pyruvate + CO2 + NADH. It catalyses the reaction oxaloacetate + H(+) = pyruvate + CO2. The chain is NAD-dependent malic enzyme from Shewanella oneidensis (strain ATCC 700550 / JCM 31522 / CIP 106686 / LMG 19005 / NCIMB 14063 / MR-1).